Consider the following 311-residue polypeptide: Aspartate carbamoyltransferase catalytic subunit (311 aa).

2 residues coordinate carbamoyl phosphate: Arg-58 and Thr-59. An L-aspartate-binding site is contributed by Lys-86. Residues Arg-108, His-136, and Gln-139 each contribute to the carbamoyl phosphate site. L-aspartate-binding residues include Arg-169 and Arg-223. 2 residues coordinate carbamoyl phosphate: Gly-264 and Pro-265.

The protein belongs to the aspartate/ornithine carbamoyltransferase superfamily. ATCase family. As to quaternary structure, heterododecamer (2C3:3R2) of six catalytic PyrB chains organized as two trimers (C3), and six regulatory PyrI chains organized as three dimers (R2).

It carries out the reaction carbamoyl phosphate + L-aspartate = N-carbamoyl-L-aspartate + phosphate + H(+). It participates in pyrimidine metabolism; UMP biosynthesis via de novo pathway; (S)-dihydroorotate from bicarbonate: step 2/3. Catalyzes the condensation of carbamoyl phosphate and aspartate to form carbamoyl aspartate and inorganic phosphate, the committed step in the de novo pyrimidine nucleotide biosynthesis pathway. The protein is Aspartate carbamoyltransferase catalytic subunit of Pelodictyon phaeoclathratiforme (strain DSM 5477 / BU-1).